A 175-amino-acid polypeptide reads, in one-letter code: RNA pyrophosphohydrolase (175 aa).

In terms of domain architecture, Nudix hydrolase spans glycine 6–threonine 149. A Nudix box motif is present at residues glycine 38–glycine 59.

It belongs to the Nudix hydrolase family. RppH subfamily. The cofactor is a divalent metal cation.

Accelerates the degradation of transcripts by removing pyrophosphate from the 5'-end of triphosphorylated RNA, leading to a more labile monophosphorylated state that can stimulate subsequent ribonuclease cleavage. The protein is RNA pyrophosphohydrolase of Azoarcus sp. (strain BH72).